We begin with the raw amino-acid sequence, 266 residues long: Thymidylate synthase (266 aa).

DUMP-binding positions include Arg-20 and 129-130 (RR). Cys-149 (nucleophile) is an active-site residue. Residues 169–172 (RSCD), Asn-180, and 210–212 (HVY) contribute to the dUMP site. Asp-172 provides a ligand contact to (6R)-5,10-methylene-5,6,7,8-tetrahydrofolate. Ala-265 is a (6R)-5,10-methylene-5,6,7,8-tetrahydrofolate binding site.

This sequence belongs to the thymidylate synthase family. Bacterial-type ThyA subfamily. As to quaternary structure, homodimer.

The protein localises to the cytoplasm. The enzyme catalyses dUMP + (6R)-5,10-methylene-5,6,7,8-tetrahydrofolate = 7,8-dihydrofolate + dTMP. Its pathway is pyrimidine metabolism; dTTP biosynthesis. Functionally, catalyzes the reductive methylation of 2'-deoxyuridine-5'-monophosphate (dUMP) to 2'-deoxythymidine-5'-monophosphate (dTMP) while utilizing 5,10-methylenetetrahydrofolate (mTHF) as the methyl donor and reductant in the reaction, yielding dihydrofolate (DHF) as a by-product. This enzymatic reaction provides an intracellular de novo source of dTMP, an essential precursor for DNA biosynthesis. The sequence is that of Thymidylate synthase from Bifidobacterium longum (strain NCC 2705).